Consider the following 143-residue polypeptide: MFMGEYLHTIDGKGRLIVPARFREALGERFIATKGLDHCLFVYPLDEWKVLEEKLRALPFTQPEARAFVRFFFSGATECELDKQGRILLPANLREYAQLDKDAVLVGVSSRVEIWSQALWADYSRQAEDAYASAAESLVNLGI.

2 consecutive SpoVT-AbrB domains span residues Glu5 to Glu47 and Ala76 to Leu119.

It belongs to the MraZ family. In terms of assembly, forms oligomers.

It is found in the cytoplasm. It localises to the nucleoid. This is Transcriptional regulator MraZ from Desulfitobacterium hafniense (strain Y51).